The primary structure comprises 565 residues: uncharacterized protein (565 aa).

5 helical membrane passes run 14-34 (LAIFLTLFVGFWIGKIKIGKF), 36-56 (LGVVTSVLLVGVLVGQLDITV), 92-112 (MGFAAIMCVFCLIIPWILAKI), 117-137 (VGEAAGLLAGSQTISAVIGVA), and 157-177 (IIPVSYAVTYIFGTAGSAWVL). Positions 296 to 381 (PEVLDPQLLD…VDAAAKQLGY (86 aa)) constitute an RCK C-terminal domain. 6 helical membrane-spanning segments follow: residues 391 to 411 (MIFVGLGILIGGLIGALSIHM), 414 to 434 (VPISLSTSGGALIGGLFFGWL), 448 to 468 (ALWILDNVGLNMFIAVVGIAA), 481 to 501 (LSLFIVGALATSIPLIAGILM), 508 to 530 (FHPALVLGCTAGARTTTAALGAI), and 545 to 565 (VTYAVGNTLLIIWGVVIVLLM).

Belongs to the AAE transporter (TC 2.A.81) family.

The protein resides in the cell membrane. This is an uncharacterized protein from Bacteroides fragilis (strain YCH46).